A 404-amino-acid chain; its full sequence is MTLDATPIIKSLLDTDAYKLHMQQAVYHRYSHMPVVAEFRCRGDELLGEYATELRHQVNMMADLALTDAEFNYLSSLPFFKADYLDWLKTFRFNPQQVNISVTNGGQLAIHISGLWYEVIMWEVPLLALISELIHRHHSPDNTVENAVNQLRKLIKLFYQHAENEGIDLSSFKLMDFGTRRRFSHRVQHAVVSELQQHFPYLIGTSNYQLAQQLGLPPVGTQAHEWFQAHQQISPDLASSQREALQSWLKEYPNQLGIALTDCITMDAFLRDFDAQFAKNYQGLRHDSGDPVQWGEKAIAHYQKLGIDPMTKTLVFSDSLDFQKALALYRHFHNRINLIFGIGTQLTCNIPGVKPLNIVIKLVECNGKPVAKLSDSPGKTICEDNEFVNRLRAAFDIPQVKQAC.

Residue histidine 224 is modified to Phosphohistidine; by autocatalysis.

This sequence belongs to the NAPRTase family. Transiently phosphorylated on a His residue during the reaction cycle. Phosphorylation strongly increases the affinity for substrates and increases the rate of nicotinate D-ribonucleotide production. Dephosphorylation regenerates the low-affinity form of the enzyme, leading to product release.

It catalyses the reaction nicotinate + 5-phospho-alpha-D-ribose 1-diphosphate + ATP + H2O = nicotinate beta-D-ribonucleotide + ADP + phosphate + diphosphate. The protein operates within cofactor biosynthesis; NAD(+) biosynthesis; nicotinate D-ribonucleotide from nicotinate: step 1/1. Functionally, catalyzes the synthesis of beta-nicotinate D-ribonucleotide from nicotinate and 5-phospho-D-ribose 1-phosphate at the expense of ATP. This Photorhabdus laumondii subsp. laumondii (strain DSM 15139 / CIP 105565 / TT01) (Photorhabdus luminescens subsp. laumondii) protein is Nicotinate phosphoribosyltransferase.